We begin with the raw amino-acid sequence, 316 residues long: Oligopeptide transport system permease protein AppB (316 aa).

Helical transmembrane passes span Leu10–Ala30, Leu100–Leu120, Phe138–Val158, Ile177–Ala197, Leu240–Val260, and Val290–Val310. The ABC transmembrane type-1 domain occupies Leu96–Ala303.

The protein belongs to the binding-protein-dependent transport system permease family. OppBC subfamily.

The protein resides in the cell membrane. Functionally, this protein is a component of an oligopeptide permease, a binding protein-dependent transport system. This APP system can completely substitute for the OPP system in both sporulation and genetic competence, though, unlike OPP, is incapable of transporting tripeptides. Probably responsible for the translocation of the substrate across the membrane. The protein is Oligopeptide transport system permease protein AppB (appB) of Bacillus subtilis (strain 168).